A 447-amino-acid chain; its full sequence is Probable glycine dehydrogenase (decarboxylating) subunit 1 (447 aa).

This sequence belongs to the GcvP family. N-terminal subunit subfamily. The glycine cleavage system is composed of four proteins: P, T, L and H. In this organism, the P 'protein' is a heterodimer of two subunits.

It carries out the reaction N(6)-[(R)-lipoyl]-L-lysyl-[glycine-cleavage complex H protein] + glycine + H(+) = N(6)-[(R)-S(8)-aminomethyldihydrolipoyl]-L-lysyl-[glycine-cleavage complex H protein] + CO2. In terms of biological role, the glycine cleavage system catalyzes the degradation of glycine. The P protein binds the alpha-amino group of glycine through its pyridoxal phosphate cofactor; CO(2) is released and the remaining methylamine moiety is then transferred to the lipoamide cofactor of the H protein. This chain is Probable glycine dehydrogenase (decarboxylating) subunit 1, found in Halalkalibacterium halodurans (strain ATCC BAA-125 / DSM 18197 / FERM 7344 / JCM 9153 / C-125) (Bacillus halodurans).